A 693-amino-acid chain; its full sequence is Elongation factor G (693 aa).

One can recognise a tr-type G domain in the interval 8 to 282 (KNTRNIGIMA…AVIDYLPSPL (275 aa)). Residues 17–24 (AHIDAGKT), 81–85 (DTPGH), and 135–138 (NKMD) contribute to the GTP site.

This sequence belongs to the TRAFAC class translation factor GTPase superfamily. Classic translation factor GTPase family. EF-G/EF-2 subfamily.

Its subcellular location is the cytoplasm. Its function is as follows. Catalyzes the GTP-dependent ribosomal translocation step during translation elongation. During this step, the ribosome changes from the pre-translocational (PRE) to the post-translocational (POST) state as the newly formed A-site-bound peptidyl-tRNA and P-site-bound deacylated tRNA move to the P and E sites, respectively. Catalyzes the coordinated movement of the two tRNA molecules, the mRNA and conformational changes in the ribosome. The sequence is that of Elongation factor G from Staphylococcus intermedius.